The following is a 169-amino-acid chain: Large ribosomal subunit protein bL19m (169 aa).

A mitochondrion-targeting transit peptide spans 1–16 (MWSRNVRLLGSWTRSY).

It belongs to the bacterial ribosomal protein bL19 family. Component of the mitochondrial large ribosomal subunit (mt-LSU). Mature yeast 74S mitochondrial ribosomes consist of a small (37S) and a large (54S) subunit. The 37S small subunit contains a 15S ribosomal RNA (15S mt-rRNA) and 34 different proteins. The 54S large subunit contains a 21S rRNA (21S mt-rRNA) and 46 different proteins.

It localises to the mitochondrion. Component of the mitochondrial ribosome (mitoribosome), a dedicated translation machinery responsible for the synthesis of mitochondrial genome-encoded proteins, including at least some of the essential transmembrane subunits of the mitochondrial respiratory chain. The mitoribosomes are attached to the mitochondrial inner membrane and translation products are cotranslationally integrated into the membrane. bL19m is essential for respiration. In Saccharomyces cerevisiae (strain ATCC 204508 / S288c) (Baker's yeast), this protein is Large ribosomal subunit protein bL19m (IMG1).